The following is a 257-amino-acid chain: Snake venom serine proteinase 11 (257 aa).

The N-terminal stretch at 1–18 (MVLIRVLANLLILQLSYA) is a signal peptide. Positions 19–24 (QKSSEL) are excised as a propeptide. The 224-residue stretch at 25 to 248 (VVGGDECNIN…YTEWIQSIIT (224 aa)) folds into the Peptidase S1 domain. 6 disulfide bridges follow: Cys31/Cys162, Cys49/Cys65, Cys97/Cys255, Cys141/Cys209, Cys173/Cys188, and Cys199/Cys224. Residues His64 and Asp109 each act as charge relay system in the active site. Asn120 carries N-linked (GlcNAc...) asparagine glycosylation. The Charge relay system role is filled by Ser203.

It belongs to the peptidase S1 family. Snake venom subfamily. In terms of assembly, monomer. In terms of tissue distribution, expressed by the venom gland.

It is found in the secreted. In terms of biological role, snake venom serine protease that may act in the hemostasis system of the prey. This Crotalus adamanteus (Eastern diamondback rattlesnake) protein is Snake venom serine proteinase 11.